Reading from the N-terminus, the 73-residue chain is Defensin-like protein 87 (73 aa).

Residues 1–27 (MTTKKTSSVVLPLLLVFALILMPMVAG) form the signal peptide. 3 disulfides stabilise this stretch: Cys33-Cys71, Cys45-Cys69, and Cys49-Cys70.

Belongs to the DEFL family.

The protein localises to the secreted. This is Defensin-like protein 87 from Arabidopsis thaliana (Mouse-ear cress).